A 275-amino-acid chain; its full sequence is NH(3)-dependent NAD(+) synthetase (275 aa).

46–53 serves as a coordination point for ATP; it reads GISGGQDS. D52 contacts Mg(2+). R140 provides a ligand contact to deamido-NAD(+). T160 contributes to the ATP binding site. E165 lines the Mg(2+) pocket. K173 and D180 together coordinate deamido-NAD(+). ATP is bound by residues K189 and T211. 260-261 serves as a coordination point for deamido-NAD(+); it reads HK.

Belongs to the NAD synthetase family. Homodimer.

The enzyme catalyses deamido-NAD(+) + NH4(+) + ATP = AMP + diphosphate + NAD(+) + H(+). It participates in cofactor biosynthesis; NAD(+) biosynthesis; NAD(+) from deamido-NAD(+) (ammonia route): step 1/1. In terms of biological role, catalyzes the ATP-dependent amidation of deamido-NAD to form NAD. Uses ammonia as a nitrogen source. The chain is NH(3)-dependent NAD(+) synthetase from Salmonella choleraesuis (strain SC-B67).